Consider the following 367-residue polypeptide: Homeobox protein Nkx-6.1 (367 aa).

The segment at 36–133 (YPAAYPPLPA…SSSSSSSASA (98 aa)) is disordered. 3 stretches are compositionally biased toward low complexity: residues 48 to 59 (PSSSSSSSSSSS), 78 to 91 (GGLSSLGSPPQQLS), and 110 to 133 (ASGAALPSASPSGSSSSSSSSASA). The tract at residues 102–268 (LSRPSMPVAS…KYLAGPERAR (167 aa)) is repressor domain. Arg-189 bears the Asymmetric dimethylarginine mark. A DNA-binding region (homeobox) is located at residues 236 to 295 (RKHTRPTFSGQQIFALEKTFEQTKYLAGPERARLAYSLGMTESQVKVWFQNRRTKWRKKH). The tract at residues 294 to 367 (KHAAEMATAK…LHASEPESSS (74 aa)) is disordered. Residues 304 to 317 (KKQDSETERLKGAS) show a composition bias toward basic and acidic residues. The interval 306-367 (QDSETERLKG…LHASEPESSS (62 aa)) is involved in DNA-binding.

In terms of tissue distribution, pancreatic beta cells.

It localises to the nucleus. Transcription factor which binds to specific A/T-rich DNA sequences in the promoter regions of a number of genes. Involved in the development of insulin-producing beta cells in the islets of Langerhans at the secondary transition. Together with NKX2-2 and IRX3 acts to restrict the generation of motor neurons to the appropriate region of the neural tube. Belongs to the class II proteins of neuronal progenitor factors, which are induced by SHH signals. The sequence is that of Homeobox protein Nkx-6.1 (NKX6-1) from Homo sapiens (Human).